Reading from the N-terminus, the 495-residue chain is Monoamine oxidase N (495 aa).

Residues 1-19 are compositionally biased toward polar residues; that stretch reads MTSRDGYQWTPETGLTQGV. Residues 1–23 are disordered; sequence MTSRDGYQWTPETGLTQGVPSLG. The Microbody targeting signal motif lies at 493–495; that stretch reads ARL.

This sequence belongs to the flavin monoamine oxidase family. It depends on FAD as a cofactor.

Its subcellular location is the peroxisome. The catalysed reaction is a secondary aliphatic amine + O2 + H2O = a primary amine + an aldehyde + H2O2. This chain is Monoamine oxidase N (maoN), found in Aspergillus niger.